The sequence spans 839 residues: Translation initiation factor IF-2 (839 aa).

2 stretches are compositionally biased toward basic and acidic residues: residues 1 to 12 (MSDNEIKNETPK) and 57 to 67 (AEAKAQEKQAA). Disordered regions lie at residues 1 to 21 (MSDNEIKNETPKKLSLQRRTK) and 57 to 244 (AEAK…GASL). Residues 68 to 90 (EKAAQAQTEAKAQTEQACTTKKT) are compositionally biased toward low complexity. Basic and acidic residues-rich tracts occupy residues 104-167 (PKTE…REET), 185-199 (READRDHDRRSEGNR), and 212-233 (GGREDDKNERNSDRRNAKDIKG). Residues 338-508 (TRAPVVTIMG…ILQSEVLELT (171 aa)) enclose the tr-type G domain. The segment at 347–354 (GHVDHGKT) is G1. Position 347 to 354 (347 to 354 (GHVDHGKT)) interacts with GTP. Positions 372-376 (GITQH) are G2. The G3 stretch occupies residues 394-397 (DTPG). GTP-binding positions include 394–398 (DTPGH) and 448–451 (NKID). The interval 448-451 (NKID) is G4. The interval 484–486 (SAK) is G5.

Belongs to the TRAFAC class translation factor GTPase superfamily. Classic translation factor GTPase family. IF-2 subfamily.

Its subcellular location is the cytoplasm. Its function is as follows. One of the essential components for the initiation of protein synthesis. Protects formylmethionyl-tRNA from spontaneous hydrolysis and promotes its binding to the 30S ribosomal subunits. Also involved in the hydrolysis of GTP during the formation of the 70S ribosomal complex. In Haemophilus ducreyi (strain 35000HP / ATCC 700724), this protein is Translation initiation factor IF-2.